The sequence spans 1286 residues: Protein patched (1286 aa).

Over methionine 1–lysine 76 the chain is Cytoplasmic. Residues valine 77 to leucine 92 traverse the membrane as a helical segment. The Extracellular segment spans residues lysine 93–proline 427. Asparagine 142, asparagine 298, asparagine 335, and asparagine 388 each carry an N-linked (GlcNAc...) asparagine glycan. Residues serine 428–leucine 448 traverse the membrane as a helical segment. In terms of domain architecture, SSD spans serine 428 to leucine 583. Residues arginine 449 to valine 465 are Cytoplasmic-facing. A helical transmembrane segment spans residues leucine 466–phenylalanine 486. The Extracellular segment spans residues asparagine 487–glutamine 492. The chain crosses the membrane as a helical span at residues valine 493 to alanine 511. Residues alanine 512 to serine 532 are Cytoplasmic-facing. The helical transmembrane segment at isoleucine 533–proline 553 threads the bilayer. The Extracellular portion of the chain corresponds to alanine 554–alanine 562. A helical membrane pass occupies residues alanine 563–leucine 583. Topologically, residues aspartate 584–serine 677 are cytoplasmic. Residues tryptophan 678–threonine 699 traverse the membrane as a helical segment. The Extracellular portion of the chain corresponds to arginine 700–glycine 931. Asparagine 807 carries an N-linked (GlcNAc...) asparagine glycan. A helical membrane pass occupies residues phenylalanine 932–leucine 952. Topologically, residues arginine 953–serine 955 are cytoplasmic. The chain crosses the membrane as a helical span at residues leucine 956–leucine 976. The Extracellular portion of the chain corresponds to serine 977 to serine 1007. The chain crosses the membrane as a helical span at residues alanine 1008–isoleucine 1028. Over serine 1029–histidine 1056 the chain is Cytoplasmic. The helical transmembrane segment at glycine 1057–isoleucine 1077 threads the bilayer. The Extracellular portion of the chain corresponds to arginine 1078–tryptophan 1082. A helical transmembrane segment spans residues leucine 1083–leucine 1103. The Cytoplasmic portion of the chain corresponds to serine 1104–serine 1286. Residues glutamate 1116 to proline 1237 are disordered. 2 stretches are compositionally biased toward polar residues: residues valine 1141 to glutamine 1152 and proline 1165 to threonine 1191. A compositionally biased stretch (low complexity) spans proline 1199–glutamine 1216. The span at proline 1224–tyrosine 1235 shows a compositional bias: pro residues.

Belongs to the patched family. As to quaternary structure, interacts (via C-terminal cytoplasmic region) with CG5504/l(2)tid; the interaction is probably direct. Interacts with hh/hedgehog.

Its subcellular location is the membrane. In terms of biological role, segmentation polarity protein. Acts as a receptor for the hedgehog protein (hh). Associates with the smoothened protein (SMO) to transduce the hedgehog signal leading to the activation of wingless, decapentaplegic and patched itself. Participates in cell interactions that establish pattern within the segment and the imaginal disks during development. In the absence of HH, represses the constitutive signaling activity of smo through fused (FU). The polypeptide is Protein patched (Drosophila melanogaster (Fruit fly)).